We begin with the raw amino-acid sequence, 171 residues long: Endoribonuclease YbeY (171 aa).

3 residues coordinate Zn(2+): H115, H119, and H125.

Belongs to the endoribonuclease YbeY family. It depends on Zn(2+) as a cofactor.

The protein resides in the cytoplasm. Functionally, single strand-specific metallo-endoribonuclease involved in late-stage 70S ribosome quality control and in maturation of the 3' terminus of the 16S rRNA. The protein is Endoribonuclease YbeY of Tropheryma whipplei (strain TW08/27) (Whipple's bacillus).